Here is a 300-residue protein sequence, read N- to C-terminus: Exonuclease (300 aa).

It carries out the reaction Exonucleolytic cleavage in the 5'- to 3'-direction to yield nucleoside 5'-phosphates.. Its function is as follows. Plays an essential role in phage DNA replication by participating in the removal of DNA-linked RNA primers. Participates also in T7 DNA packaging, host DNA degradation and phage genetic recombination. This Escherichia phage T7 (Bacteriophage T7) protein is Exonuclease.